A 563-amino-acid polypeptide reads, in one-letter code: Pre-hexon-linking protein IIIa (563 aa).

A peripentonal hexon-tethering domain region spans residues M1–N117. A binding to hexon-linking protein region spans residues G148 to D261. S235 carries the post-translational modification Phosphoserine; by host. T284 bears the Phosphothreonine; by host mark. The tract at residues R449–A472 is disordered. A phosphoserine; by host mark is found at S452 and S456. The segment covering A462 to A472 has biased composition (low complexity). S475 and S486 each carry phosphoserine; by host. The tract at residues K522–L543 is disordered. The propeptide occupies G549 to L563.

Belongs to the adenoviridae hexon-linking protein IIIa family. Interacts with hexon proteins; this interaction tethers the peripentonal hexons to hexons situated in the facet. Interacts with the penton protein (via N-terminus). Interacts with packaging protein 3; this interaction is required to promote correct genome packaging. Cleaved near the C-terminus by the viral protease during virion maturation to form the mature protein.

It is found in the virion. It localises to the host nucleus. Functionally, structural component of the virion that acts as a cement protein on the capsid exterior which mediates the interactions between the hexons, including the peripentonal hexons, and reaches all the way to the penton vertices. Two hexon linking proteins IIIa, one from each facet, stabilize the unique edge interface between a pair of facets. As the virus enters the host cell, hexon linking proteins IIIa are shed concomitant with virion acidification in the endosome. During virus assembly, seems to play a role in the serotype specificity of the packaging of viral DNA via its interaction with packaging protein 3. This is Pre-hexon-linking protein IIIa from Canis lupus familiaris (Dog).